An 883-amino-acid chain; its full sequence is Translation initiation factor IF-2 (883 aa).

2 disordered regions span residues 53 to 90 and 171 to 294; these read RSHG…GRSK and EEAA…FERP. A compositionally biased stretch (polar residues) spans 81 to 90; the sequence is EVTVNSGRSK. Low complexity predominate over residues 172 to 185; the sequence is EAAAAAKAAEALAA. Residues 221–238 show a composition bias toward basic and acidic residues; it reads RSDDRNNRSAPRNERGPG. A compositionally biased stretch (low complexity) spans 256-265; sequence GNSNNSNNRG. Residues 382–551 enclose the tr-type G domain; the sequence is QRPPVVTIMG…SVQAELLELK (170 aa). Residues 391 to 398 form a G1 region; that stretch reads GHVDHGKT. 391–398 provides a ligand contact to GTP; sequence GHVDHGKT. The tract at residues 416–420 is G2; sequence GITQH. A G3 region spans residues 437–440; sequence DTPG. Residues 437 to 441 and 491 to 494 contribute to the GTP site; these read DTPGH and NKID. The tract at residues 491 to 494 is G4; sequence NKID. Positions 527–529 are G5; sequence SAK.

It belongs to the TRAFAC class translation factor GTPase superfamily. Classic translation factor GTPase family. IF-2 subfamily.

The protein resides in the cytoplasm. In terms of biological role, one of the essential components for the initiation of protein synthesis. Protects formylmethionyl-tRNA from spontaneous hydrolysis and promotes its binding to the 30S ribosomal subunits. Also involved in the hydrolysis of GTP during the formation of the 70S ribosomal complex. The sequence is that of Translation initiation factor IF-2 from Stenotrophomonas maltophilia (strain R551-3).